A 265-amino-acid polypeptide reads, in one-letter code: Imidazole glycerol phosphate synthase subunit HisF (265 aa).

Active-site residues include Asp17 and Asp136.

Belongs to the HisA/HisF family. As to quaternary structure, heterodimer of HisH and HisF.

The protein localises to the cytoplasm. The enzyme catalyses 5-[(5-phospho-1-deoxy-D-ribulos-1-ylimino)methylamino]-1-(5-phospho-beta-D-ribosyl)imidazole-4-carboxamide + L-glutamine = D-erythro-1-(imidazol-4-yl)glycerol 3-phosphate + 5-amino-1-(5-phospho-beta-D-ribosyl)imidazole-4-carboxamide + L-glutamate + H(+). It participates in amino-acid biosynthesis; L-histidine biosynthesis; L-histidine from 5-phospho-alpha-D-ribose 1-diphosphate: step 5/9. Its function is as follows. IGPS catalyzes the conversion of PRFAR and glutamine to IGP, AICAR and glutamate. The HisF subunit catalyzes the cyclization activity that produces IGP and AICAR from PRFAR using the ammonia provided by the HisH subunit. The protein is Imidazole glycerol phosphate synthase subunit HisF of Mycolicibacterium paratuberculosis (strain ATCC BAA-968 / K-10) (Mycobacterium paratuberculosis).